Here is a 346-residue protein sequence, read N- to C-terminus: Aldose 1-epimerase (346 aa).

Arginine 79 is a substrate binding site. Histidine 175 serves as the catalytic Proton donor. Aspartate 245 lines the substrate pocket. The active-site Proton acceptor is glutamate 309.

The protein belongs to the aldose epimerase family.

The protein localises to the cytoplasm. It carries out the reaction alpha-D-glucose = beta-D-glucose. The protein operates within carbohydrate metabolism; hexose metabolism. Its function is as follows. Mutarotase converts alpha-aldose to the beta-anomer. It is active on D-glucose, L-arabinose, D-xylose, D-galactose, maltose and lactose. This is Aldose 1-epimerase (galM) from Escherichia coli (strain K12).